A 509-amino-acid chain; its full sequence is Tyrosine-protein phosphatase non-receptor type substrate 1 (509 aa).

The signal sequence occupies residues 1–31 (MEPAGPAPGRLGPLLFCLLLSASCFCAGASG). An Ig-like V-type domain is found at 32-138 (KELKVTQADK…IVEPDTEIKS (107 aa)). Residues 32 to 373 (KELKVTQADK…PDNNAYYNWN (342 aa)) are Extracellular-facing. N-linked (GlcNAc...) asparagine glycans are attached at residues Asn-54, Asn-93, Asn-169, Asn-181, Asn-205, Asn-209, Asn-242, Asn-246, Asn-271, Asn-293, Asn-312, Asn-320, and Asn-345. Residues Cys-55 and Cys-122 are joined by a disulfide bond. Ig-like C1-type domains lie at 150–248 (PSSP…ANFS) and 255–349 (PTLK…HTVR). Residues Cys-172 and Cys-229 are joined by a disulfide bond. Residues Cys-274 and Cys-332 are joined by a disulfide bond. The helical transmembrane segment at 374 to 394 (VFIGVGVACALLVVLLMAALY) threads the bilayer. At 395–509 (LLRIKQKKAK…EYASVQVQRK (115 aa)) the chain is on the cytoplasmic side. Tyr-436 bears the Phosphotyrosine; by Tyr-kinases mark. Residues 436–439 (YADL) carry the SH2-binding motif. The interval 441-472 (LPKEKKPAPRVPEPNNHTEYASIETGKLPRPE) is disordered. An SH3-binding motif is present at residues 446–451 (KPAPRV). Residues Tyr-460, Tyr-477, and Tyr-501 each carry the phosphotyrosine; by Tyr-kinases modification. 3 short sequence motifs (SH2-binding) span residues 460–463 (YASI), 477–480 (YADL), and 501–504 (YASV). The disordered stretch occupies residues 485-509 (LNRAQPTPKPEPSFSEYASVQVQRK). Residues 500–509 (EYASVQVQRK) show a composition bias toward polar residues.

As to quaternary structure, binds PTPN11 when tyrosine-phosphorylated, except in macrophages, where it primarily binds PTPN6. Binds GRB2 in vitro. Binds FGR. Binds JAK2 irrespective of its phosphorylation status and forms a stable complex. Binds SCAP1 and/or SCAP2. The resulting complex recruits FYB1. Binds PTK2B. Interacts with TRIM2. Post-translationally, N-glycosylated. Phosphorylated on tyrosine residues in response to insulin, cell adhesion or epidermal growth factors. Dephosphorylated by PTPN11. As to expression, highly expressed in brain, spleen, lung, liver and kidney. Detected at lower levels in heart. Highly expressed in alveolar and peritoneal macrophages, and at lower levels in dendritic cells.

The protein localises to the membrane. Its function is as follows. Immunoglobulin-like cell surface receptor for CD47. Acts as docking protein and induces translocation of PTPN6, PTPN11 and other binding partners from the cytosol to the plasma membrane. Supports adhesion of cerebellar neurons, neurite outgrowth and glial cell attachment. May play a key role in intracellular signaling during synaptogenesis and in synaptic function. Involved in the negative regulation of receptor tyrosine kinase-coupled cellular responses induced by cell adhesion, growth factors or insulin. Mediates negative regulation of phagocytosis, mast cell activation and dendritic cell activation. CD47 binding prevents maturation of immature dendritic cells and inhibits cytokine production by mature dendritic cells. Plays a role in antiviral immunity and limits new world arenavirus infection by decreasing virus internalization. Receptor for THBS1. Interaction with THBS1 stimulates phosphorylation of SIRPA. In response to THBS1, involved in ROS signaling in non-phagocytic cells, stimulating NADPH oxidase-derived ROS production. The polypeptide is Tyrosine-protein phosphatase non-receptor type substrate 1 (Sirpa) (Rattus norvegicus (Rat)).